The primary structure comprises 431 residues: MYRTKVGLKDRQQLYKLIISQLLYDGYISIANGLINEIKPQSVCAPSEQLLHLIKLGMENDDTAVQYAIGRSDTVAPGTGIDLEFDADVQTMSPEASEYETCYVTSHKGPCRVATYSRDGQLIATGSADASIKILDTERMLAKSAMPIEVMMNETAQQNMENHPVIRTLYDHVDEVTCLAFHPTEQILASGSRDYTLKLFDYSKPSAKRAFKYIQEAEMLRSISFHPSGDFILVGTQHPTLRLYDINTFQCFVSCNPQDQHTDAICSVNYNPSANMYVTGSKDGCIKLWDGVSNRCITTFEKAHDGAEVCSAIFSKNSKYILSSGKDSVAKLWEISTGRTLVRYTGAGLSGRQVHRTQAVFNHTEDYILLPDERTISLCCWDSRTAERRNLLSLGHNNIVRCIVHSPTNPGFMTCSDDFRARFWYRRSTTD.

WD repeat units lie at residues 106-145, 171-210, 215-254, 260-301, 303-343, and 395-431; these read SHKG…AKSA, DHVD…AKRA, QEAE…CFVS, QHTD…TTFE, AHDG…TLVR, and GHNN…STTD.

Homodimer. The CSTF complex is composed of CSTF1 (50 kDa subunit), CSTF2 (64 kDa subunit) and CSTF3 (77 kDa subunit). Interacts (via repeats WD) directly with CSTF3. Interacts (via repeat WD6) with BARD1. Interacts with ERCC6.

It is found in the nucleus. In terms of biological role, one of the multiple factors required for polyadenylation and 3'-end cleavage of mammalian pre-mRNAs. May be responsible for the interaction of CSTF with other factors to form a stable complex on the pre-mRNA. The polypeptide is Cleavage stimulation factor subunit 1 (Cstf1) (Mus musculus (Mouse)).